We begin with the raw amino-acid sequence, 559 residues long: Pentatricopeptide repeat-containing protein At4g38010 (559 aa).

PPR repeat units lie at residues S70–P104, D105–D139, D140–R170, D171–E201, N203–R233, S238–K268, D269–P304, D305–W339, D340–K370, N371–P405, N406–L440, and K443–K473. Positions I478–F554 are type E motif.

This sequence belongs to the PPR family. PCMP-E subfamily.

The protein is Pentatricopeptide repeat-containing protein At4g38010 (PCMP-E45) of Arabidopsis thaliana (Mouse-ear cress).